A 346-amino-acid chain; its full sequence is Methylthioribose-1-phosphate isomerase (346 aa).

Residues 48–50 (RGA), Arg88, and Gln192 each bind substrate. The active-site Proton donor is Asp233. Substrate is bound at residue 243-244 (NK).

Belongs to the eIF-2B alpha/beta/delta subunits family. MtnA subfamily.

It catalyses the reaction 5-(methylsulfanyl)-alpha-D-ribose 1-phosphate = 5-(methylsulfanyl)-D-ribulose 1-phosphate. It participates in amino-acid biosynthesis; L-methionine biosynthesis via salvage pathway; L-methionine from S-methyl-5-thio-alpha-D-ribose 1-phosphate: step 1/6. Its function is as follows. Catalyzes the interconversion of methylthioribose-1-phosphate (MTR-1-P) into methylthioribulose-1-phosphate (MTRu-1-P). The protein is Methylthioribose-1-phosphate isomerase of Alcanivorax borkumensis (strain ATCC 700651 / DSM 11573 / NCIMB 13689 / SK2).